The primary structure comprises 27 residues: Cupiennin-3d (27 aa).

The residue at position 27 (Glu-27) is a Glutamic acid 1-amide.

As to expression, expressed by the venom gland.

It is found in the secreted. In Cupiennius salei (American wandering spider), this protein is Cupiennin-3d.